Here is a 302-residue protein sequence, read N- to C-terminus: MPAGLLGIEELGRAEIEAILSRAKDFQPLQSQSLKKLDTLRGKMIVNLFFEASTRTRTSFEIAAKRLGADAISITASGSSVSKGESLVDTLNTLGAMRPDAIVMRHSASGAPHFLARYLPTPIINAGDGTHEHPTQALLDARTILDRCGQLDGLKVAIIGDIAHSRVARSNVHLLSKFGAKIVLCGPASLLPVELAQLAPGVVLTTDIRDAIKDADVIMMLRVQLERQHEASFPASEYFRFYGLQLAHLDLAKPEAIVMHPGPINRGRELSSEVADFQRSVILNQVENGIAVRMAVLEKVIG.

Residues Arg55 and Thr56 each contribute to the carbamoyl phosphate site. Lys83 contributes to the L-aspartate binding site. Carbamoyl phosphate-binding residues include Arg105, His133, and Gln136. Residues Arg166 and Arg222 each coordinate L-aspartate. Carbamoyl phosphate is bound by residues Gly262 and Pro263.

This sequence belongs to the aspartate/ornithine carbamoyltransferase superfamily. ATCase family. As to quaternary structure, heterododecamer (2C3:3R2) of six catalytic PyrB chains organized as two trimers (C3), and six regulatory PyrI chains organized as three dimers (R2).

It carries out the reaction carbamoyl phosphate + L-aspartate = N-carbamoyl-L-aspartate + phosphate + H(+). It functions in the pathway pyrimidine metabolism; UMP biosynthesis via de novo pathway; (S)-dihydroorotate from bicarbonate: step 2/3. In terms of biological role, catalyzes the condensation of carbamoyl phosphate and aspartate to form carbamoyl aspartate and inorganic phosphate, the committed step in the de novo pyrimidine nucleotide biosynthesis pathway. This Solibacter usitatus (strain Ellin6076) protein is Aspartate carbamoyltransferase catalytic subunit.